The primary structure comprises 666 residues: Endogenous retrovirus group K member 19 Gag polyprotein (666 aa).

Gly2 carries the N-myristoyl glycine lipid modification. Disordered stretches follow at residues 170 to 189 and 223 to 264; these read LVGP…AGQV and PLES…GSEL. A compositionally biased stretch (pro residues) spans 232-247; it reads GMPPAPQGRAPYPQPP. 2 consecutive CCHC-type zinc fingers follow at residues 544–561 and 580–597; these read GKCY…NCPV and DLCP…QCRS. A disordered region spans residues 598-640; the sequence is KFDKNGQPLSGNEQRGQPQAPQQTGAFPIQPFVPHGFQGQQPP. The segment covering 604 to 622 has biased composition (polar residues); the sequence is QPLSGNEQRGQPQAPQQTG.

It belongs to the beta type-B retroviral Gag protein family. HERV class-II K(HML-2) gag subfamily. Post-translationally, myristoylation is essential for retroviral assembly. Alteration of the glycine residue leads to a block in the budding of particles and an accumulation of Gag inside the cell. In terms of processing, specific enzymatic cleavages may yield mature proteins.

It is found in the cell membrane. The products of the Gag polyproteins of infectious retroviruses perform highly complex orchestrated tasks during the assembly, budding, maturation, and infection stages of the viral replication cycle. During viral assembly, the proteins form membrane associations and self-associations that ultimately result in budding of an immature virion from the infected cell. Gag precursors also function during viral assembly to selectively bind and package two plus strands of genomic RNA. Endogenous Gag proteins may have kept, lost or modified their original function during evolution. This chain is Endogenous retrovirus group K member 19 Gag polyprotein (ERVK-19), found in Homo sapiens (Human).